The sequence spans 477 residues: Cytochrome b mRNA maturase bI3 (477 aa).

Residues 1-163 (MRLLKSHPLL…IPWIGQDIVE (163 aa)) form a cytochrome b region. Transmembrane regions (helical) follow at residues 32 to 52 (FGSL…TLAM), 86 to 106 (ASAF…YGSY), 113 to 133 (VWAI…LGYV), 142 to 162 (WGAT…QDIV), and 166 to 186 (IITL…VVVY). A maturase region spans residues 164 to 477 (SKIITLIINL…YSTLNYPDAK (314 aa)).

It in the N-terminal section; belongs to the cytochrome b family. This sequence in the C-terminal section; belongs to the LAGLIDADG endonuclease family.

Its subcellular location is the mitochondrion inner membrane. Mitochondrial mRNA maturase required for splicing of intron 3 of the cytochrome b (cob) gene, containing its own coding sequence. The sequence is that of Cytochrome b mRNA maturase bI3 (bI3) from Neurospora crassa (strain ATCC 24698 / 74-OR23-1A / CBS 708.71 / DSM 1257 / FGSC 987).